Reading from the N-terminus, the 487-residue chain is ATP synthase subunit beta 1 (487 aa).

Position 162 to 169 (162 to 169 (GGAGVGKT)) interacts with ATP.

This sequence belongs to the ATPase alpha/beta chains family. As to quaternary structure, F-type ATPases have 2 components, CF(1) - the catalytic core - and CF(0) - the membrane proton channel. CF(1) has five subunits: alpha(3), beta(3), gamma(1), delta(1), epsilon(1). CF(0) has three main subunits: a(1), b(2) and c(9-12). The alpha and beta chains form an alternating ring which encloses part of the gamma chain. CF(1) is attached to CF(0) by a central stalk formed by the gamma and epsilon chains, while a peripheral stalk is formed by the delta and b chains.

It is found in the cell inner membrane. The enzyme catalyses ATP + H2O + 4 H(+)(in) = ADP + phosphate + 5 H(+)(out). Its function is as follows. Produces ATP from ADP in the presence of a proton gradient across the membrane. The catalytic sites are hosted primarily by the beta subunits. This Gluconobacter oxydans (strain 621H) (Gluconobacter suboxydans) protein is ATP synthase subunit beta 1.